We begin with the raw amino-acid sequence, 101 residues long: Ubiquitin-related modifier 1 homolog (101 aa).

At G101 the chain carries 1-thioglycine. G101 is covalently cross-linked (Glycyl lysine isopeptide (Gly-Lys) (interchain with K-? in acceptor proteins)).

It belongs to the URM1 family. Interacts with cer. Post-translationally, C-terminal thiocarboxylation occurs in 2 steps, it is first acyl-adenylated (-COAMP) via the hesA/moeB/thiF part of the MOCS3 homolog, then thiocarboxylated (-COSH) via the rhodanese domain of the MOCS3 homolog.

The protein localises to the cytoplasm. Its pathway is tRNA modification; 5-methoxycarbonylmethyl-2-thiouridine-tRNA biosynthesis. In terms of biological role, acts as a sulfur carrier required for 2-thiolation of mcm(5)S(2)U at tRNA wobble positions of cytosolic tRNA(Lys), tRNA(Glu) and tRNA(Gln). Serves as sulfur donor in tRNA 2-thiolation reaction by being thiocarboxylated (-COSH) at its C-terminus by MOCS3. The sulfur is then transferred to tRNA to form 2-thiolation of mcm(5)S(2)U. Also acts as a ubiquitin-like protein (UBL) that is covalently conjugated via an isopeptide bond to lysine residues of target proteins such as Prx2/Jafrac1, Ciao1, Eip71CD and GILT1. The thiocarboxylated form serves as substrate for conjugation and oxidative stress specifically induces the formation of UBL-protein conjugates. The sequence is that of Ubiquitin-related modifier 1 homolog from Drosophila sechellia (Fruit fly).